A 190-amino-acid polypeptide reads, in one-letter code: Jupiter microtubule associated homolog 2 (190 aa).

Position 1 is an N-acetylmethionine (Met-1). Residues 1 to 190 form a disordered region; sequence MFQVPDSEGG…PGGKSSISFY (190 aa). Position 30 is a phosphoserine (Ser-30). Thr-35 carries the phosphothreonine modification. Polar residues predominate over residues 35–44; the sequence is TPSSRPNRMA. 3 positions are modified to phosphoserine: Ser-45, Ser-69, and Ser-97. The span at 110–129 shows a compositional bias: basic and acidic residues; it reads KPKDHVFLCEGEEPKSDLKA. 2 positions are modified to phosphoserine: Ser-132 and Ser-144. The segment covering 139-167 has biased composition (basic and acidic residues); sequence PGEKGSARKAGPAKEQEPMPTVDSHEPRL.

Belongs to the JUPITER family. Monomer. Dimer. Interacts with TPCN1. As to expression, expressed in liver, kidney, prostate, testis and uterus.

The protein localises to the cytoplasm. It is found in the nucleus. Nicotinic acid adenine dinucleotide phosphate (NAADP) binding protein required for NAADP-evoked intracellular calcium release. Confers NAADP-sensitivity to the two pore channels (TPCs) complex. Enables NAADP to activate Ca(2+) release from the endoplasmic reticulum through ryanodine receptors. Its function is as follows. (Microbial infection) Involved in the endolysosomal trafficking of human coronavirus SARS-CoV-2. The protein is Jupiter microtubule associated homolog 2 of Homo sapiens (Human).